The primary structure comprises 354 residues: Ferrochelatase (354 aa).

The Fe cation site is built by His-204 and Glu-306.

It belongs to the ferrochelatase family.

The protein resides in the cytoplasm. The catalysed reaction is heme b + 2 H(+) = protoporphyrin IX + Fe(2+). Its pathway is porphyrin-containing compound metabolism; protoheme biosynthesis; protoheme from protoporphyrin-IX: step 1/1. Catalyzes the ferrous insertion into protoporphyrin IX. This chain is Ferrochelatase, found in Coxiella burnetii (strain Dugway 5J108-111).